Reading from the N-terminus, the 1816-residue chain is Kinesin-like protein KIF1B (1816 aa).

N-acetylserine is present on serine 2. Residues 5–354 form the Kinesin motor domain; that stretch reads SVKVAVRVRP…LRYADRAKQI (350 aa). An ATP-binding site is contributed by 97-104; that stretch reads GQTGAGKS. The segment at 270–350 is interaction with KIFBP; that stretch reads NINKSLTTLG…TLSTLRYADR (81 aa). A disordered region spans residues 431 to 450; the sequence is FSTASMGSLTSSPSSCSLNS. Over residues 432 to 450 the composition is skewed to low complexity; sequence STASMGSLTSSPSSCSLNS. Positions 470–512 form a coiled coil; sequence GEEAIERLKESEKIIAELNETWEEKLRKTEAIRMEREALLAEM. The FHA domain occupies 556–612; sequence TRVGQADAERRQDIVLSGAHIKEEHCIFRSERNNTGEVIVTLEPCERSETYVNGKRV. Phosphothreonine occurs at positions 647 and 652. A coiled-coil region spans residues 672 to 731; it reads IDMKQEMEKRLQEMEILYKREKEEADLLLEQQRLDYESKLQALQKQVETRSLAAETTEEE. Phosphoserine occurs at positions 1054, 1057, 1416, 1454, and 1487. The interval 1550-1570 is disordered; it reads STTTFESAITPSESSGYDSAD. Residues serine 1573, serine 1603, serine 1610, and serine 1613 each carry the phosphoserine modification. A compositionally biased stretch (low complexity) spans 1620–1637; that stretch reads SVSSFSSSTLTPSSTCPS. The interval 1620–1659 is disordered; that stretch reads SVSSFSSSTLTPSSTCPSLVDSRSSSMDQKTPEANSRASS. Positions 1640-1659 are enriched in polar residues; it reads DSRSSSMDQKTPEANSRASS. A PH domain is found at 1701 to 1799; the sequence is VVSKKGYLHF…WLYAFNPLLA (99 aa).

This sequence belongs to the TRAFAC class myosin-kinesin ATPase superfamily. Kinesin family. Unc-104 subfamily. Monomer. Interacts with KIFBP; positively regulates KIF1B microtubule motor activity. Interacts (via C-terminus end of the kinesin-motor domain) with CHP1; the interaction occurs in a calcium-dependent manner. Interacts with MADD (via death domain); links this isoform of KIF1B to Rab3-carrying vesicles in anterograde synaptic vesicle transport. Expressed in the brain with lower expression in testis and liver (at protein level). Strongly expressed in the brain and ovary, with lower expression in lung, kidney, uterus, testis and liver. As to expression, isoform 2 is expressed in non-neuronal tissues.

Its subcellular location is the cytoplasm. The protein localises to the cytoskeleton. It is found in the cytoplasmic vesicle. The protein resides in the secretory vesicle. It localises to the synaptic vesicle membrane. Its subcellular location is the lysosome. The catalysed reaction is ATP + H2O + a kinesin associated with a microtubule at position (n) = ADP + phosphate a kinesin associated with a microtubule at position (n+1, toward the plus end).. Has a plus-end-directed microtubule motor activity and functions as a motor for transport of vesicles and organelles along microtubules. Its function is as follows. Has a plus-end-directed microtubule motor activity and functions as a motor for anterograde synaptic vesicle transport along axonal microtubules from the cell body to the presynapse in neuronal cells. In terms of biological role, has a plus-end-directed microtubule motor activity and functions as a motor for the translocation of lysosomes from perinuclear regions to the cell periphery. The sequence is that of Kinesin-like protein KIF1B from Rattus norvegicus (Rat).